The following is a 294-amino-acid chain: NAD kinase (294 aa).

Asp72 (proton acceptor) is an active-site residue. NAD(+) is bound by residues 72–73 (DG), 146–147 (ND), Arg157, Arg174, Asp176, 187–192 (TAYSLS), and Gln247.

It belongs to the NAD kinase family. Requires a divalent metal cation as cofactor.

The protein resides in the cytoplasm. It carries out the reaction NAD(+) + ATP = ADP + NADP(+) + H(+). Involved in the regulation of the intracellular balance of NAD and NADP, and is a key enzyme in the biosynthesis of NADP. Catalyzes specifically the phosphorylation on 2'-hydroxyl of the adenosine moiety of NAD to yield NADP. The chain is NAD kinase from Marinobacter nauticus (strain ATCC 700491 / DSM 11845 / VT8) (Marinobacter aquaeolei).